The sequence spans 93 residues: HIG1 domain family member 1A, mitochondrial (93 aa).

The HIG1 domain occupies 1–93 (MSTDTGVSLP…YREFWAKPKP (93 aa)). S2 bears the N-acetylserine mark. S8 carries the post-translational modification Phosphoserine. 2 consecutive transmembrane segments (helical) span residues 26 to 46 (EAPF…YGLY) and 60 to 80 (LIHM…VGMG).

As to quaternary structure, associates with cytochrome c oxidase (COX, complex IV); proposed complex component. Also associates with respiratory chain supercomplexes.

The protein resides in the mitochondrion membrane. It is found in the mitochondrion inner membrane. In terms of biological role, proposed subunit of cytochrome c oxidase (COX, complex IV), which is the terminal component of the mitochondrial respiratory chain that catalyzes the reduction of oxygen to water. May play a role in the assembly of respiratory supercomplexes. This chain is HIG1 domain family member 1A, mitochondrial (HIGD1A), found in Homo sapiens (Human).